The chain runs to 98 residues: Large ribosomal subunit protein uL23 (98 aa).

The protein belongs to the universal ribosomal protein uL23 family. Part of the 50S ribosomal subunit. Contacts protein L29, and trigger factor when it is bound to the ribosome.

In terms of biological role, one of the early assembly proteins it binds 23S rRNA. One of the proteins that surrounds the polypeptide exit tunnel on the outside of the ribosome. Forms the main docking site for trigger factor binding to the ribosome. This Rickettsia africae (strain ESF-5) protein is Large ribosomal subunit protein uL23.